Reading from the N-terminus, the 292-residue chain is Acetylglutamate kinase (292 aa).

Residues 64–65 (GG), Arg-86, and Asn-190 each bind substrate.

Belongs to the acetylglutamate kinase family. ArgB subfamily.

The protein resides in the cytoplasm. It carries out the reaction N-acetyl-L-glutamate + ATP = N-acetyl-L-glutamyl 5-phosphate + ADP. The protein operates within amino-acid biosynthesis; L-arginine biosynthesis; N(2)-acetyl-L-ornithine from L-glutamate: step 2/4. Catalyzes the ATP-dependent phosphorylation of N-acetyl-L-glutamate. In Geobacter sp. (strain M21), this protein is Acetylglutamate kinase.